Reading from the N-terminus, the 61-residue chain is Large ribosomal subunit protein uL30 (61 aa).

Belongs to the universal ribosomal protein uL30 family. As to quaternary structure, part of the 50S ribosomal subunit.

This Frankia casuarinae (strain DSM 45818 / CECT 9043 / HFP020203 / CcI3) protein is Large ribosomal subunit protein uL30.